A 652-amino-acid polypeptide reads, in one-letter code: Capsid protein (652 aa).

Residues 1–11 (MSSNDSAQTRN) are compositionally biased toward polar residues. The disordered stretch occupies residues 1-70 (MSSNDSAQTR…SSSDPPSASG (70 aa)). Residues 34–47 (TNGPTTNSTSGSVG) show a composition bias toward low complexity.

It localises to the virion. Its function is as follows. The capsid protein self-assembles to form an icosahedral capsid with a T=2 symmetry made of 120 subunits. In Atkinsonella hypoxylon virus (isolate 2H) (AhV), this protein is Capsid protein.